The following is a 293-amino-acid chain: Acetyl-coenzyme A carboxylase carboxyl transferase subunit beta (293 aa).

One can recognise a CoA carboxyltransferase N-terminal domain in the interval 29 to 293 (LWSKCPECGQ…GCKPMELTSA (265 aa)). 4 residues coordinate Zn(2+): Cys-33, Cys-36, Cys-52, and Cys-55. The C4-type zinc finger occupies 33–55 (CPECGQVVYLKDLKLNASVCANC).

This sequence belongs to the AccD/PCCB family. In terms of assembly, acetyl-CoA carboxylase is a heterohexamer composed of biotin carboxyl carrier protein (AccB), biotin carboxylase (AccC) and two subunits each of ACCase subunit alpha (AccA) and ACCase subunit beta (AccD). Zn(2+) is required as a cofactor.

It localises to the cytoplasm. The catalysed reaction is N(6)-carboxybiotinyl-L-lysyl-[protein] + acetyl-CoA = N(6)-biotinyl-L-lysyl-[protein] + malonyl-CoA. It functions in the pathway lipid metabolism; malonyl-CoA biosynthesis; malonyl-CoA from acetyl-CoA: step 1/1. Component of the acetyl coenzyme A carboxylase (ACC) complex. Biotin carboxylase (BC) catalyzes the carboxylation of biotin on its carrier protein (BCCP) and then the CO(2) group is transferred by the transcarboxylase to acetyl-CoA to form malonyl-CoA. This chain is Acetyl-coenzyme A carboxylase carboxyl transferase subunit beta, found in Synechococcus sp. (strain CC9605).